The chain runs to 638 residues: RAF proto-oncogene serine/threonine-protein kinase (638 aa).

Ser-43 bears the Phosphoserine mark. Positions 56-130 (STMRVYLPNK…VGAELQVDFL (75 aa)) constitute an RBD domain. The segment at 137-183 (THNFVRKTFLKLAFCDICQKFLLNAFRCQTCGYKFHEHCSTKVPTMC) adopts a Phorbol-ester/DAG-type zinc-finger fold. Residues His-138, Cys-151, Cys-154, Cys-164, Cys-167, His-172, Cys-175, and Cys-183 each coordinate Zn(2+). A Phosphoserine modification is found at Ser-257. Position 266 is a phosphothreonine; by autocatalysis (Thr-266). Positions 279-323 (LRSHSESGSPNNLSPTGWSNAKAPAPTHREKAASSTGQEKNKIRA) are disordered. The span at 284–297 (ESGSPNNLSPTGWS) shows a compositional bias: polar residues. Ser-329 is subject to Phosphoserine. The 261-residue stretch at 340–600 (VMLSSRIGSG…PQILSSIELL (261 aa)) folds into the Protein kinase domain. ATP contacts are provided by residues 346-354 (IGSGSFGTV) and Lys-366. Catalysis depends on Asp-459, which acts as the Proton acceptor. Position 490 is a phosphoserine (Ser-490).

The protein belongs to the protein kinase superfamily. TKL Ser/Thr protein kinase family. RAF subfamily. Zn(2+) is required as a cofactor. Post-translationally, phosphorylation at Ser-257 inactivates kinase activity. Dephosphorylation of Ser-257 by a complex containing protein phosphatase 1 relieves inactivation, leading to stimulate RAF1 activity.

It is found in the cytoplasm. The protein resides in the cell membrane. The catalysed reaction is L-seryl-[protein] + ATP = O-phospho-L-seryl-[protein] + ADP + H(+). It catalyses the reaction L-threonyl-[protein] + ATP = O-phospho-L-threonyl-[protein] + ADP + H(+). Its function is as follows. Serine/threonine-protein kinase that acts as a regulatory link between the membrane-associated Ras GTPases and the MAPK/ERK cascade, and this critical regulatory link functions as a switch determining cell fate decisions. RAF1 activation initiates a mitogen-activated protein kinase (MAPK) cascade that comprises a sequential phosphorylation of the dual-specific MAPK kinases (MAP2K1/MEK1 and MAP2K2/MEK2) and the extracellular signal-regulated kinases (MAPK3/ERK1 and MAPK1/ERK2). The polypeptide is RAF proto-oncogene serine/threonine-protein kinase (raf1) (Xenopus laevis (African clawed frog)).